We begin with the raw amino-acid sequence, 99 residues long: Nucleoid-associated protein SEQ_0368 (99 aa).

It belongs to the YbaB/EbfC family. Homodimer.

It localises to the cytoplasm. The protein localises to the nucleoid. Binds to DNA and alters its conformation. May be involved in regulation of gene expression, nucleoid organization and DNA protection. The protein is Nucleoid-associated protein SEQ_0368 of Streptococcus equi subsp. equi (strain 4047).